The primary structure comprises 388 residues: Phosphopentomutase (388 aa).

6 residues coordinate Mn(2+): aspartate 10, aspartate 282, histidine 287, aspartate 323, histidine 324, and histidine 335.

The protein belongs to the phosphopentomutase family. Mn(2+) is required as a cofactor.

It is found in the cytoplasm. The enzyme catalyses 2-deoxy-alpha-D-ribose 1-phosphate = 2-deoxy-D-ribose 5-phosphate. It carries out the reaction alpha-D-ribose 1-phosphate = D-ribose 5-phosphate. It functions in the pathway carbohydrate degradation; 2-deoxy-D-ribose 1-phosphate degradation; D-glyceraldehyde 3-phosphate and acetaldehyde from 2-deoxy-alpha-D-ribose 1-phosphate: step 1/2. Its function is as follows. Isomerase that catalyzes the conversion of deoxy-ribose 1-phosphate (dRib-1-P) and ribose 1-phosphate (Rib-1-P) to deoxy-ribose 5-phosphate (dRib-5-P) and ribose 5-phosphate (Rib-5-P), respectively. The sequence is that of Phosphopentomutase from Desulfitobacterium hafniense (strain DSM 10664 / DCB-2).